A 589-amino-acid chain; its full sequence is uncharacterized protein (589 aa).

This is an uncharacterized protein from Bacillus anthracis.